A 278-amino-acid chain; its full sequence is Putative phosphoenolpyruvate synthase regulatory protein (278 aa).

157 to 164 (GVSRSGKT) is an ADP binding site.

It belongs to the pyruvate, phosphate/water dikinase regulatory protein family. PSRP subfamily.

It catalyses the reaction [pyruvate, water dikinase] + ADP = [pyruvate, water dikinase]-phosphate + AMP + H(+). The catalysed reaction is [pyruvate, water dikinase]-phosphate + phosphate + H(+) = [pyruvate, water dikinase] + diphosphate. Its function is as follows. Bifunctional serine/threonine kinase and phosphorylase involved in the regulation of the phosphoenolpyruvate synthase (PEPS) by catalyzing its phosphorylation/dephosphorylation. The sequence is that of Putative phosphoenolpyruvate synthase regulatory protein from Vibrio parahaemolyticus serotype O3:K6 (strain RIMD 2210633).